The chain runs to 236 residues: NAP1-binding protein 2 (236 aa).

At serine 102 the chain carries Phosphoserine. In terms of domain architecture, SH3 spans 110–171; it reads IVNQRAVALY…PEEFVSYIQP (62 aa). Phosphoserine occurs at positions 196 and 235.

In terms of assembly, interacts with PBS2 and PTC1.

It localises to the cytoplasm. Negatively regulates the high-osmolarity glycerol (HOG) pathway through its negative regulation of the HOG1 kinase activity. Mediates the binding between the PTC1 phosphatase and the PBS2 MAP/ERK kinase (MEK). With PTC1, regulates endoplasmic reticulum inheritance through the cell wall integrity (CWI) MAPK pathway by modulating the MAPK, SLT2. This Saccharomyces cerevisiae (strain ATCC 204508 / S288c) (Baker's yeast) protein is NAP1-binding protein 2 (NBP2).